A 251-amino-acid polypeptide reads, in one-letter code: Seminal metalloprotease 1 (251 aa).

Positions 1 to 18 (MFPQIWGVIFLFTPTVFS) are cleaved as a signal peptide. A Peptidase M12A domain is found at 44-248 (NGIVNQIYHW…RKLNKMYRCP (205 aa)). Asn-55 and Asn-120 each carry an N-linked (GlcNAc...) asparagine glycan. 2 cysteine pairs are disulfide-bonded: Cys-87/Cys-247 and Cys-111/Cys-136. Zn(2+) is bound at residue His-144. Glu-145 is a catalytic residue. His-148 and His-154 together coordinate Zn(2+). An N-linked (GlcNAc...) asparagine glycan is attached at Asn-185.

The cofactor is Zn(2+). Post-translationally, undergoes cleavage in the male during mating with a cleaved product detected in the ejaculatory duct and/or bulb of males by 8-10 minutes after the start of mating. Further cleavage occurs in the mated female. May undergo cleavage in a two-step process where it is first cleaved by Sems, making it susceptible to activational cleavage which may be carried out by another protease or by autocleavage. As to expression, produced in the male accessory glands and secreted into seminal fluid. In mated females, confined to the reproductive tract and also detected in eggs laid by mated females (at protein level).

It is found in the secreted. In terms of biological role, seminal fluid metalloprotease which is transferred to females during mating and is required for processing of two other seminal fluid proteins Acp26Aa and Acp36DE in mated females. In Drosophila melanogaster (Fruit fly), this protein is Seminal metalloprotease 1.